The chain runs to 305 residues: Ribose import binding protein RbsB (305 aa).

Positions 1 to 18 (MKKAVSVILTLSLFLLTA) are cleaved as a signal peptide. A lipid anchor (N-palmitoyl cysteine) is attached at Cys-19. Cys-19 is lipidated: S-diacylglycerol cysteine.

The protein belongs to the bacterial solute-binding protein 2 family. As to quaternary structure, the complex is composed of an ATP-binding protein (RbsA), two transmembrane proteins (RbsC) and a solute-binding protein (RbsB). Interacts with FloT.

Its subcellular location is the cell membrane. The protein localises to the membrane raft. Its function is as follows. Part of the ABC transporter complex RbsABC involved in ribose import. Binds ribose. This is Ribose import binding protein RbsB (rbsB) from Bacillus subtilis (strain 168).